The sequence spans 217 residues: MKVNTKSKKVNKAWLNSHVNDPYVKAAQKDGYRARAAYKLKEIDEQLKLIRPGATVVDLGSTPGAWSQYVRRCLSPEGAAVGALNGRIISLDLLPMEPIEGVQFILGDFREEPVLAQLQEALGGGKADVVVSDMAPNLSGNGTTDAARIALLVELAVDFSIHHMKPEGALVVKLFHGGAYDDLVALFRQTFKVVKPIKPKSSRDKSSETFLVGMGLK.

5 residues coordinate S-adenosyl-L-methionine: G64, W66, D92, D108, and D133. The Proton acceptor role is filled by K173.

This sequence belongs to the class I-like SAM-binding methyltransferase superfamily. RNA methyltransferase RlmE family.

It localises to the cytoplasm. It carries out the reaction uridine(2552) in 23S rRNA + S-adenosyl-L-methionine = 2'-O-methyluridine(2552) in 23S rRNA + S-adenosyl-L-homocysteine + H(+). Its function is as follows. Specifically methylates the uridine in position 2552 of 23S rRNA at the 2'-O position of the ribose in the fully assembled 50S ribosomal subunit. The protein is Ribosomal RNA large subunit methyltransferase E of Delftia acidovorans (strain DSM 14801 / SPH-1).